The following is a 779-amino-acid chain: Probable phosphoketolase 2 (779 aa).

The protein belongs to the XFP family. Thiamine diphosphate serves as cofactor.

The chain is Probable phosphoketolase 2 from Rhizobium meliloti (strain 1021) (Ensifer meliloti).